We begin with the raw amino-acid sequence, 324 residues long: ATP-dependent 6-phosphofructokinase (324 aa).

Residue glycine 15 coordinates ATP. An ADP-binding site is contributed by 25–29 (RGVVR). ATP is bound by residues 76–77 (RF) and 106–109 (GDGS). Residue aspartate 107 coordinates Mg(2+). 130–132 (TID) serves as a coordination point for substrate. Aspartate 132 functions as the Proton acceptor in the catalytic mechanism. Arginine 159 lines the ADP pocket. Residues arginine 167 and 174–176 (MGR) contribute to the substrate site. ADP-binding positions include 190-192 (GCE), lysine 216, and 218-220 (KRH). Substrate is bound by residues glutamate 227, arginine 248, and 254–257 (HIQR).

The protein belongs to the phosphofructokinase type A (PFKA) family. ATP-dependent PFK group I subfamily. Prokaryotic clade 'B1' sub-subfamily. As to quaternary structure, homotetramer. It depends on Mg(2+) as a cofactor.

Its subcellular location is the cytoplasm. It carries out the reaction beta-D-fructose 6-phosphate + ATP = beta-D-fructose 1,6-bisphosphate + ADP + H(+). It functions in the pathway carbohydrate degradation; glycolysis; D-glyceraldehyde 3-phosphate and glycerone phosphate from D-glucose: step 3/4. With respect to regulation, allosterically activated by ADP and other diphosphonucleosides, and allosterically inhibited by phosphoenolpyruvate. Catalyzes the phosphorylation of D-fructose 6-phosphate to fructose 1,6-bisphosphate by ATP, the first committing step of glycolysis. The sequence is that of ATP-dependent 6-phosphofructokinase from Actinobacillus pleuropneumoniae serotype 5b (strain L20).